A 502-amino-acid polypeptide reads, in one-letter code: Probable cytosol aminopeptidase (502 aa).

Mn(2+) contacts are provided by Lys-267 and Asp-272. Residue Lys-279 is part of the active site. Mn(2+)-binding residues include Asp-290, Asp-349, and Glu-351. Arg-353 is a catalytic residue.

This sequence belongs to the peptidase M17 family. Requires Mn(2+) as cofactor.

The protein localises to the cytoplasm. It catalyses the reaction Release of an N-terminal amino acid, Xaa-|-Yaa-, in which Xaa is preferably Leu, but may be other amino acids including Pro although not Arg or Lys, and Yaa may be Pro. Amino acid amides and methyl esters are also readily hydrolyzed, but rates on arylamides are exceedingly low.. It carries out the reaction Release of an N-terminal amino acid, preferentially leucine, but not glutamic or aspartic acids.. Functionally, presumably involved in the processing and regular turnover of intracellular proteins. Catalyzes the removal of unsubstituted N-terminal amino acids from various peptides. This chain is Probable cytosol aminopeptidase, found in Aeromonas salmonicida (strain A449).